The following is a 391-amino-acid chain: Protein kinase ORF14 (391 aa).

One can recognise a Protein kinase domain in the interval 109-391 (VPLRHTRGNI…ETLVDEFSKI (283 aa)). Lys134 contributes to the ATP binding site. Asp235 acts as the Proton acceptor in catalysis.

This sequence belongs to the protein kinase superfamily. Ser/Thr protein kinase family.

It catalyses the reaction L-seryl-[protein] + ATP = O-phospho-L-seryl-[protein] + ADP + H(+). The catalysed reaction is L-threonyl-[protein] + ATP = O-phospho-L-threonyl-[protein] + ADP + H(+). The sequence is that of Protein kinase ORF14 (ORF14) from Ictalurid herpesvirus 1 (strain Auburn) (IcHV-1).